The primary structure comprises 559 residues: D-2-hydroxyglutarate dehydrogenase, mitochondrial (559 aa).

Residues 1-78 (MMMQKLRRSG…GMLLQQYKCF (78 aa)) constitute a mitochondrion transit peptide. An FAD-binding PCMH-type domain is found at 130 to 309 (YKGSSKLMLL…TKVSILTQPK (180 aa)).

The protein belongs to the FAD-binding oxidoreductase/transferase type 4 family. Homodimer. Requires FAD as cofactor.

The protein localises to the mitochondrion. The catalysed reaction is (R)-2-hydroxyglutarate + A = 2-oxoglutarate + AH2. Functionally, catalyzes the oxidation of (R)-2-hydroxyglutarate to 2-oxoglutarate. May be involved in the catabolism of propionyl-CoA derived from beta-oxidation. Involved in degradation of lysine for the supply of carbon and electrons to the ETF/ETFQO complex during dark-induced sugar starvation. The protein is D-2-hydroxyglutarate dehydrogenase, mitochondrial (D2HGDH) of Arabidopsis thaliana (Mouse-ear cress).